The following is an 87-amino-acid chain: MANIKSAKKRAVQSEKARKHNASRRSMMRTFIKKVYAAIEAGDKAAAQKAFNEMQPIVDRQAAKGLIHKNKAARHKANLTAQINKLA.

The interval Met-1–Ser-26 is disordered.

Belongs to the bacterial ribosomal protein bS20 family.

In terms of biological role, binds directly to 16S ribosomal RNA. In Klebsiella pneumoniae (strain 342), this protein is Small ribosomal subunit protein bS20.